Here is a 353-residue protein sequence, read N- to C-terminus: G-protein complex alpha subunit gpaA (353 aa).

The segment at 1–25 is disordered; the sequence is MGCGMSTEDKEGKARNEEIENQLKR. The span at 7 to 25 shows a compositional bias: basic and acidic residues; that stretch reads TEDKEGKARNEEIENQLKR. In terms of domain architecture, G-alpha spans 32 to 353; sequence NEIKMLLLGA…QENLRLCGLI (322 aa). The segment at 35–48 is G1 motif; sequence KMLLLGAGESGKST. Positions 47 and 181 each coordinate a divalent metal cation. Positions 173 to 181 are G2 motif; the sequence is DVLRSRVKT. Residues 196–205 are G3 motif; it reads YRMFDVGGQR. The segment at 265-272 is G4 motif; that stretch reads ILFLNKID. A G5 motif region spans residues 323–328; that stretch reads TCATDT.

Belongs to the G-alpha family. G(q) subfamily. As to quaternary structure, g proteins are composed of 3 units; alpha, beta and gamma. The alpha chain contains the guanine nucleotide binding site. Interacts with gprM.

Its function is as follows. G-protein complex alpha subunit that plays a role in conidiation and regulation of the biosynthesis of secondary metabolites such as dihydroxynaphthalene (DHN)-melanin, via interaction with the G protein-coupled receptor gprM. In Aspergillus fumigatus (strain CBS 144.89 / FGSC A1163 / CEA10) (Neosartorya fumigata), this protein is G-protein complex alpha subunit gpaA.